Reading from the N-terminus, the 413-residue chain is MALRRFLRTSPITSTAQPAPLYDNQDIQDIVGAYARPWQSRFGDITITTTSAPVWSGRYPSVAARNIIVNTILGAHLNAFSGGVIAQYRGLTWRDNIMSSLAPPSQNPPPPAWVPAENVQLDSDNYPQYALNLSKMWSVNLDVHIMTMWALSDYGPLYEISVPTAPMPAMTTAALMAYIGCSITQLAMTAYQYAGQLPQTAAATMTTTLRWLAAIWFGSLCGVVHRNHTVNGFYFDFGKPGFNPDHAVLKWNDGNRAAPPAAARFRVYRVRSPHWQQMTSEVAGAILAQSVTAVAGLTAMFNNRGLPVWAQNIPHFTGAAAGTRVSRTYNPVTMAAARHQNWQAAGLITAVKQAELDQQYTDYAQAIEVHLTAQLAANPVANGRMPIQPFLPADFAAAGGTNQVVADARLMFP.

This sequence belongs to the reoviridae clamp protein family. Interacts with capsid proteins VP3, VP4 and VP7.

The protein localises to the virion. Its function is as follows. Located at the interface of the incomplete T=13 outer capsid and the pseudo T=2 inner capsid, 120 VP6 subunits clamp and stabilize the inner capsid shell. The polypeptide is Clamp protein VP6 (S8) (Ctenopharyngodon idella (Grass carp)).